The chain runs to 521 residues: Ribonuclease Y (521 aa).

Residues M1 to I21 form a helical membrane-spanning segment. The KH domain occupies T211–L271. An HD domain is found at V337 to A430.

This sequence belongs to the RNase Y family.

It localises to the cell membrane. Endoribonuclease that initiates mRNA decay. This is Ribonuclease Y from Desulfotalea psychrophila (strain LSv54 / DSM 12343).